The chain runs to 435 residues: UPF0761 membrane protein mma_2179 (435 aa).

Helical transmembrane passes span 45–65, 103–123, 142–162, 177–197, 208–228, and 252–272; these read VLAL…FPLF, LSAF…LMID, ILVY…SMTF, VPFV…MVAF, LVEW…FEIV, and FPIF…GAVV.

The protein belongs to the UPF0761 family.

It localises to the cell inner membrane. This chain is UPF0761 membrane protein mma_2179, found in Janthinobacterium sp. (strain Marseille) (Minibacterium massiliensis).